The following is a 64-amino-acid chain: Alpha-like toxin BmK M2 (64 aa).

The LCN-type CS-alpha/beta domain occupies arginine 2–histidine 64. 4 cysteine pairs are disulfide-bonded: cysteine 12-cysteine 63, cysteine 16-cysteine 36, cysteine 22-cysteine 46, and cysteine 26-cysteine 48.

Belongs to the long (4 C-C) scorpion toxin superfamily. Sodium channel inhibitor family. Alpha subfamily. In terms of tissue distribution, expressed by the venom gland.

It is found in the secreted. Its function is as follows. Alpha toxins bind voltage-independently at site-3 of sodium channels (Nav) and inhibit the inactivation of the activated channels, thereby blocking neuronal transmission. This toxin is active against both mammals and insects, and is classified as an alpha-like toxin. This Olivierus martensii (Manchurian scorpion) protein is Alpha-like toxin BmK M2.